The sequence spans 194 residues: dTTP/UTP pyrophosphatase (194 aa).

The Proton acceptor role is filled by Asp-73.

It belongs to the Maf family. YhdE subfamily. A divalent metal cation is required as a cofactor.

It is found in the cytoplasm. The enzyme catalyses dTTP + H2O = dTMP + diphosphate + H(+). The catalysed reaction is UTP + H2O = UMP + diphosphate + H(+). In terms of biological role, nucleoside triphosphate pyrophosphatase that hydrolyzes dTTP and UTP. May have a dual role in cell division arrest and in preventing the incorporation of modified nucleotides into cellular nucleic acids. The sequence is that of dTTP/UTP pyrophosphatase from Clostridium botulinum (strain Loch Maree / Type A3).